Reading from the N-terminus, the 271-residue chain is uncharacterized protein (271 aa).

A run of 3 helical transmembrane segments spans residues 30–50, 189–209, and 218–238; these read IWFP…GMLL, ALAA…YFLI, and FLVT…IFAC.

The protein resides in the cell membrane. This is an uncharacterized protein from Aquifex aeolicus (strain VF5).